Reading from the N-terminus, the 255-residue chain is 2-(S)-hydroxypropyl-CoM dehydrogenase 3 (255 aa).

Residues Ile19, Asp38, 64-65 (DV), and Asn91 contribute to the NAD(+) site. (S)-2-hydroxypropyl-coenzyme M-binding residues include Ser143 and Tyr156. Residue Tyr156 is the Proton acceptor of the active site. Position 160 (Lys160) interacts with NAD(+). Position 188 (Thr188) interacts with (S)-2-hydroxypropyl-coenzyme M. 189–193 (VTSTG) lines the NAD(+) pocket. Tyr215 is a (S)-2-hydroxypropyl-coenzyme M binding site.

Belongs to the short-chain dehydrogenases/reductases (SDR) family. As to quaternary structure, homotetramer.

It carries out the reaction (S)-2-hydroxypropyl-coenzyme M + NAD(+) = 2-oxopropyl-coenzyme M + NADH + H(+). With respect to regulation, not inhibited by 2-(2-methyl-2-hydroxypropylthio)ethanesulfonate (M-HPC), an achiral analog of both R-HPC and S-HPC. Its function is as follows. Involved in aliphatic epoxide carboxylation. Catalyzes the reversible oxidation of (2S)-2-hydroxypropyl-coenzyme M (S-HPC) to 2-oxopropyl-coenzyme M (2-KPC). The enzyme is highly specific for the S enantiomers. In vitro can also use the aliphatic ketone 2-butanone and the aliphatic alcohol 2-propanol, and shows an inherent stereoselectivity for 2-butanone reduction. In Xanthobacter autotrophicus (strain ATCC BAA-1158 / Py2), this protein is 2-(S)-hydroxypropyl-CoM dehydrogenase 3.